The following is a 409-amino-acid chain: DNA replication and repair protein RecF (409 aa).

30–37 (GSNGHGKT) contributes to the ATP binding site.

It belongs to the RecF family.

The protein resides in the cytoplasm. Its function is as follows. The RecF protein is involved in DNA metabolism; it is required for DNA replication and normal SOS inducibility. RecF binds preferentially to single-stranded, linear DNA. It also seems to bind ATP. This Rhodococcus erythropolis (strain PR4 / NBRC 100887) protein is DNA replication and repair protein RecF.